The following is a 617-amino-acid chain: Putative type VI secretion system protein VgrGB (617 aa).

The tract at residues 449–469 is disordered; the sequence is RTFHATNPSPYPLPASKTRTS.

It belongs to the VgrG protein family.

A Vgr protein that is probably part of a type VI secretion system (T6SS). May be required for export of proteins involved in Rhs-mediated cellular contact-dependent growth inhibition (CDI). This Dickeya dadantii (strain 3937) (Erwinia chrysanthemi (strain 3937)) protein is Putative type VI secretion system protein VgrGB (vgrGB).